The primary structure comprises 773 residues: Transducin-like enhancer protein 4 (773 aa).

3 disordered regions span residues 1 to 22, 140 to 162, and 182 to 360; these read MIRDLSKMYPQTRHPAPHQPAQ, HGHGLPVPLTPHPSGLQPPAIPP, and LPIK…ASSL. The interval 1–136 is q domain; sequence MIRDLSKMYP…AIIGQQLQAQ (136 aa). Positions 137–204 are GP domain; that stretch reads HLSHGHGLPV…HQRDRDSIKS (68 aa). Residues 183–202 show a composition bias toward basic and acidic residues; it reads PIKDEKKHHDNDHQRDRDSI. Positions 203 to 212 are enriched in low complexity; that stretch reads KSSSVSPSAS. The tract at residues 205 to 274 is ccN domain; the sequence is SSVSPSASFR…SPRGSPAHSP (70 aa). Residues Ser-208, Ser-212, and Ser-222 each carry the phosphoserine modification. The span at 215–252 shows a compositional bias: basic and acidic residues; the sequence is GAEKHRNSADYSSESKKQKTEEKEIAARYDSDGEKSDD. N6-acetyllysine is present on Lys-237. Phosphoserine occurs at positions 245, 250, 269, and 273. Over residues 273–289 the composition is skewed to basic and acidic residues; it reads SPRENGLDKTRLLKKDA. Residues 275–452 form an SP domain region; that stretch reads RENGLDKTRL…PGGKPAYSFH (178 aa). At Lys-281 the chain carries N6-acetyllysine. The span at 290–305 shows a compositional bias: low complexity; it reads PISPASIASSSSTPSS. Residue Ser-292 is modified to Phosphoserine. Residues 317-328 are compositionally biased toward polar residues; that stretch reads TTPVSKSNTPTP. Thr-318 is subject to Phosphothreonine. A phosphoserine mark is found at Ser-321 and Ser-323. Residues Thr-325, Thr-327, Thr-334, and Thr-340 each carry the phosphothreonine modification. Residue Ser-419 is modified to Phosphoserine. WD repeat units lie at residues 485-523, 531-570, 575-614, 617-656, 658-697, 699-738, and 740-773; these read NHGEVVCAVTISNPTRHVYTGGKGCVKVWDISHPGNKSP, NRDNYIRSCRLLPDGRTLIVGGEASTLSIWDLAAPTPRIK, SSAPACYALAISPDSKVCFSCCSDGNIAVWDLHNQTLVRQ, GHTDGASCIDISNDGTKLWTGGLDNTVRSWDLREGRQLQQ, DFTSQIFSLGYCPTGEWLAVGMENSNVEVLHVTKPDKYQL, LHESCVLSLKFAHCGKWFVSTGKDNLLNAWRTPYGASIFQ, and KESSSVLSCDISVDDKYIVTGSGDKKATVYEVIY.

This sequence belongs to the WD repeat Groucho/TLE family. As to quaternary structure, homooligomer and heterooligomer with other family members. Interacts with PAX5. Interacts with LEF1, TCF7, TCF7L1 and TCF7L2. Interacts with ZNF703; TLE4 may mediate ZNF703 transcriptional repression. Interacts with SIX3 and SIX6. Interacts with PAX2. Interacts with TLE1. Post-translationally, phosphorylated. PAX5 binding increases phosphorylation. Ubiquitinated by XIAP/BIRC4. As to expression, in all tissues examined, mostly in brain, and muscle.

The protein resides in the nucleus. In terms of biological role, transcriptional corepressor that binds to a number of transcription factors. Inhibits the transcriptional activation mediated by PAX5, and by CTNNB1 and TCF family members in Wnt signaling. The effects of full-length TLE family members may be modulated by association with dominant-negative AES. Essential for the transcriptional repressor activity of SIX3 during retina and lens development and for SIX3 transcriptional auto-repression. Involved in transcriptional repression of GNRHR and enhances MSX1-mediated transcriptional repression of CGA/alpha-GSU. The protein is Transducin-like enhancer protein 4 (TLE4) of Homo sapiens (Human).